The sequence spans 301 residues: Type II restriction enzyme BslI subunit beta (301 aa).

Residues 62-82 (CPDGHTKWNQNLTKEMTCSEC) form a CHC2-type zinc finger.

Heterotetramer of two alpha and two beta subunits. The alpha subunit is believed to be responsible for DNA recognition, while the beta subunit is thought to mediate cleavage. It depends on Zn(2+) as a cofactor.

It carries out the reaction Endonucleolytic cleavage of DNA to give specific double-stranded fragments with terminal 5'-phosphates.. Functionally, a P subtype restriction enzyme that recognizes the double-stranded sequence 5'-CCN(7)GG-3' and cleaves after N-7. The polypeptide is Type II restriction enzyme BslI subunit beta (Bacillus sp. (strain NEB-606)).